Reading from the N-terminus, the 134-residue chain is Probable salivary secreted peptide (134 aa).

An N-terminal signal peptide occupies residues 1–24; it reads MGAQKTIAYLAIIAIAVIFAQVNT.

The protein resides in the secreted. This chain is Probable salivary secreted peptide, found in Bombus ignitus (Bumblebee).